Consider the following 425-residue polypeptide: MTNVSERIYDSKNSLKFLDDEIYQSIERELQRQRSQLQLIASENFASKAVMEAQGSFLTNKYAEGYIGKRYYCGCEYVDEVENLAIERLCKLFNVRFANVQPHSGSQANQAVFASLLTPGDTILGLSISCGGHLTHGAAPNLSGKWFKSIQYAIDRGTCLLDMDEVERLALEHKPKLIIAGASAYPRRMDFKRFREIADKVSAYLLADIAHYAGLIAAGEYPSPAKYAHIITSTTHKTLRGPRGGVVITNDEALHKKVQSAVFPGLQGGPLMHVIAAKAVAFKEALAPEFKAYIKRVVENAKVLAQALQKHGLSVITGGTDSHIVLVDLRPQKLTGKGAVDSLERAGITCNKNSVPFDMEKPTITSGLRFGTAAETTRGLKAENFKEIADLINEVIQGLINGNNSDVERIVKNKVKKICDDFPIY.

Residue Gly-132 to Leu-134 participates in (6S)-5,6,7,8-tetrahydrofolate binding. The residue at position 237 (Lys-237) is an N6-(pyridoxal phosphate)lysine.

Belongs to the SHMT family. Homodimer. Pyridoxal 5'-phosphate serves as cofactor.

Its subcellular location is the cytoplasm. It carries out the reaction (6R)-5,10-methylene-5,6,7,8-tetrahydrofolate + glycine + H2O = (6S)-5,6,7,8-tetrahydrofolate + L-serine. It functions in the pathway one-carbon metabolism; tetrahydrofolate interconversion. Its pathway is amino-acid biosynthesis; glycine biosynthesis; glycine from L-serine: step 1/1. Functionally, catalyzes the reversible interconversion of serine and glycine with tetrahydrofolate (THF) serving as the one-carbon carrier. This reaction serves as the major source of one-carbon groups required for the biosynthesis of purines, thymidylate, methionine, and other important biomolecules. Also exhibits THF-independent aldolase activity toward beta-hydroxyamino acids, producing glycine and aldehydes, via a retro-aldol mechanism. This chain is Serine hydroxymethyltransferase, found in Wolbachia sp. subsp. Brugia malayi (strain TRS).